Reading from the N-terminus, the 533-residue chain is Chromosomal replication initiator protein DnaA (533 aa).

A domain I, interacts with DnaA modulators region spans residues 1–72; that stretch reads MNDFWQHCSA…DLARDFWNAP (72 aa). Positions 72-196 are domain II; it reads PIEVQFVLDP…EAADSMYERS (125 aa). The tract at residues 83–113 is disordered; sequence AGQRSPAGATPLAPRAPLPSANPAPVAPGPA. A compositionally biased stretch (pro residues) spans 96 to 110; it reads PRAPLPSANPAPVAP. Positions 197-413 are domain III, AAA+ region; it reads KLNPVLTFDN…GALRKILAYS (217 aa). Glycine 241, glycine 243, lysine 244, and threonine 245 together coordinate ATP. The interval 414–533 is domain IV, binds dsDNA; that stretch reads KFHGREITIE…LHVLEQTLKG (120 aa).

This sequence belongs to the DnaA family. In terms of assembly, oligomerizes as a right-handed, spiral filament on DNA at oriC.

It localises to the cytoplasm. In terms of biological role, plays an essential role in the initiation and regulation of chromosomal replication. ATP-DnaA binds to the origin of replication (oriC) to initiate formation of the DNA replication initiation complex once per cell cycle. Binds the DnaA box (a 9 base pair repeat at the origin) and separates the double-stranded (ds)DNA. Forms a right-handed helical filament on oriC DNA; dsDNA binds to the exterior of the filament while single-stranded (ss)DNA is stabiized in the filament's interior. The ATP-DnaA-oriC complex binds and stabilizes one strand of the AT-rich DNA unwinding element (DUE), permitting loading of DNA polymerase. After initiation quickly degrades to an ADP-DnaA complex that is not apt for DNA replication. Binds acidic phospholipids. This is Chromosomal replication initiator protein DnaA from Burkholderia mallei (strain SAVP1).